The sequence spans 109 residues: Nucleoid-associated protein Caul_4574 (109 aa).

The protein belongs to the YbaB/EbfC family. In terms of assembly, homodimer.

The protein localises to the cytoplasm. The protein resides in the nucleoid. In terms of biological role, binds to DNA and alters its conformation. May be involved in regulation of gene expression, nucleoid organization and DNA protection. This is Nucleoid-associated protein Caul_4574 from Caulobacter sp. (strain K31).